The primary structure comprises 421 residues: Serine/threonine-protein kinase OXI1 (421 aa).

Residues Leu17–Phe329 enclose the Protein kinase domain. ATP is bound by residues Leu23–Val31 and Lys45. Residue Asp149 is the Proton acceptor of the active site. The interval Asp167–Glu246 is activation loop. At Ser235 the chain carries Phosphoserine; by PDPK1. Residues Arg330–Phe421 form the AGC-kinase C-terminal domain. Residues Phe418–Phe421 carry the PIF motif.

The protein belongs to the protein kinase superfamily. AGC Ser/Thr protein kinase family. As to quaternary structure, interacts with PDK1 and PDK2. As to expression, expressed in roots and root hair cells.

It catalyses the reaction L-seryl-[protein] + ATP = O-phospho-L-seryl-[protein] + ADP + H(+). It carries out the reaction L-threonyl-[protein] + ATP = O-phospho-L-threonyl-[protein] + ADP + H(+). Its activity is regulated as follows. Activated in response to hydrogen peroxide and cellulase elicitor. Activated by PDK1 in a phosphatidic acid dependent manner. Its function is as follows. Involved in oxidative burst-mediated signaling. Required for basal resistance to P.parasitica infection and root hair growth. Partly required for the activation of MPK3 and MPK6 by hydrogen peroxide and cellulase elicitor. This Arabidopsis thaliana (Mouse-ear cress) protein is Serine/threonine-protein kinase OXI1.